The primary structure comprises 166 residues: Transcription antitermination protein NusB (166 aa).

This sequence belongs to the NusB family.

Functionally, involved in transcription antitermination. Required for transcription of ribosomal RNA (rRNA) genes. Binds specifically to the boxA antiterminator sequence of the ribosomal RNA (rrn) operons. This is Transcription antitermination protein NusB from Chromohalobacter salexigens (strain ATCC BAA-138 / DSM 3043 / CIP 106854 / NCIMB 13768 / 1H11).